The chain runs to 316 residues: Olfactory receptor 8J1 (316 aa).

The Extracellular portion of the chain corresponds to 1–25; sequence MAPENFTRVTEFILTGVSSCPELQI. N-linked (GlcNAc...) asparagine glycosylation is present at N5. The chain crosses the membrane as a helical span at residues 26–46; sequence PLFLVFLVLYGLTMAGNLGII. Residues 47 to 54 are Cytoplasmic-facing; sequence TLTSVDSR. A helical transmembrane segment spans residues 55–75; the sequence is LQTPMYFFLQHLALINLGNST. Topologically, residues 76 to 99 are extracellular; the sequence is VIAPKMLINFLVKKKTTSFYECAT. C97 and C189 are disulfide-bonded. A helical transmembrane segment spans residues 100-120; sequence QLGGFLFFIVSEVIMLALMAY. Over 121–139 the chain is Cytoplasmic; it reads DRYVAICNPLLYMVVVSRR. Residues 140 to 160 traverse the membrane as a helical segment; it reads LCLLLVSLTYLYGFSTAIVVS. At 161 to 197 the chain is on the extracellular side; that stretch reads SYVFSVSYCSSNIINHFYCDNVPLLALSCSDTYLPET. A helical membrane pass occupies residues 198 to 217; it reads VVFISAATNVVGSLIIVLVS. Topologically, residues 218-237 are cytoplasmic; the sequence is YFNIVLSILKICSSEGRKKA. A helical membrane pass occupies residues 238 to 258; the sequence is FSTCASHMMAVTIFYGTLLFM. Residues 259 to 272 are Extracellular-facing; that stretch reads YVQPRSNHSLDTDD. Residues 273-293 traverse the membrane as a helical segment; that stretch reads KMASVFYTLVIPMLNPLIYSL. Over 294–316 the chain is Cytoplasmic; the sequence is RNKDVKTALQRFMTNLCYSFKTM.

The protein belongs to the G-protein coupled receptor 1 family.

Its subcellular location is the cell membrane. In terms of biological role, odorant receptor. This is Olfactory receptor 8J1 (OR8J1) from Homo sapiens (Human).